Consider the following 223-residue polypeptide: Phosphoribosylformylglycinamidine synthase subunit PurQ (223 aa).

The Glutamine amidotransferase type-1 domain occupies 2 to 223 (KFAVLKFPGS…MVNSWREQNV (222 aa)). Cysteine 85 acts as the Nucleophile in catalysis. Residues histidine 193 and glutamate 195 contribute to the active site.

Part of the FGAM synthase complex composed of 1 PurL, 1 PurQ and 2 PurS subunits.

The protein localises to the cytoplasm. It catalyses the reaction N(2)-formyl-N(1)-(5-phospho-beta-D-ribosyl)glycinamide + L-glutamine + ATP + H2O = 2-formamido-N(1)-(5-O-phospho-beta-D-ribosyl)acetamidine + L-glutamate + ADP + phosphate + H(+). The catalysed reaction is L-glutamine + H2O = L-glutamate + NH4(+). It participates in purine metabolism; IMP biosynthesis via de novo pathway; 5-amino-1-(5-phospho-D-ribosyl)imidazole from N(2)-formyl-N(1)-(5-phospho-D-ribosyl)glycinamide: step 1/2. Functionally, part of the phosphoribosylformylglycinamidine synthase complex involved in the purines biosynthetic pathway. Catalyzes the ATP-dependent conversion of formylglycinamide ribonucleotide (FGAR) and glutamine to yield formylglycinamidine ribonucleotide (FGAM) and glutamate. The FGAM synthase complex is composed of three subunits. PurQ produces an ammonia molecule by converting glutamine to glutamate. PurL transfers the ammonia molecule to FGAR to form FGAM in an ATP-dependent manner. PurS interacts with PurQ and PurL and is thought to assist in the transfer of the ammonia molecule from PurQ to PurL. The protein is Phosphoribosylformylglycinamidine synthase subunit PurQ of Staphylococcus saprophyticus subsp. saprophyticus (strain ATCC 15305 / DSM 20229 / NCIMB 8711 / NCTC 7292 / S-41).